The following is a 156-amino-acid chain: Small ribosomal subunit protein uS7 (156 aa).

It belongs to the universal ribosomal protein uS7 family. In terms of assembly, part of the 30S ribosomal subunit. Contacts proteins S9 and S11.

Functionally, one of the primary rRNA binding proteins, it binds directly to 16S rRNA where it nucleates assembly of the head domain of the 30S subunit. Is located at the subunit interface close to the decoding center, probably blocks exit of the E-site tRNA. This is Small ribosomal subunit protein uS7 from Synechococcus sp. (strain JA-2-3B'a(2-13)) (Cyanobacteria bacterium Yellowstone B-Prime).